The sequence spans 353 residues: Photosystem II D2 protein (353 aa).

Thr2 bears the N-acetylthreonine mark. Phosphothreonine is present on Thr2. Residues Cys41 to Thr61 traverse the membrane as a helical segment. Position 118 (His118) interacts with chlorophyll a. The helical transmembrane segment at Gly125–Pro141 threads the bilayer. Positions 130 and 143 each coordinate pheophytin a. A helical transmembrane segment spans residues Val153–Ser166. His198 is a binding site for chlorophyll a. A helical membrane pass occupies residues Ala208–Asp228. 2 residues coordinate a plastoquinone: His215 and Phe262. His215 provides a ligand contact to Fe cation. His269 is a Fe cation binding site. The chain crosses the membrane as a helical span at residues Gly279–Arg295.

This sequence belongs to the reaction center PufL/M/PsbA/D family. In terms of assembly, PSII is composed of 1 copy each of membrane proteins PsbA, PsbB, PsbC, PsbD, PsbE, PsbF, PsbH, PsbI, PsbJ, PsbK, PsbL, PsbM, PsbT, PsbX, PsbY, PsbZ, Psb30/Ycf12, at least 3 peripheral proteins of the oxygen-evolving complex and a large number of cofactors. It forms dimeric complexes. The D1/D2 heterodimer binds P680, chlorophylls that are the primary electron donor of PSII, and subsequent electron acceptors. It shares a non-heme iron and each subunit binds pheophytin, quinone, additional chlorophylls, carotenoids and lipids. There is also a Cl(-1) ion associated with D1 and D2, which is required for oxygen evolution. The PSII complex binds additional chlorophylls, carotenoids and specific lipids. is required as a cofactor. In terms of processing, phosphorylated on threonine residue(s); phosphorylation increases with increasing light levels.

It is found in the plastid. The protein resides in the chloroplast thylakoid membrane. It catalyses the reaction 2 a plastoquinone + 4 hnu + 2 H2O = 2 a plastoquinol + O2. Its function is as follows. Photosystem II (PSII) is a light-driven water:plastoquinone oxidoreductase that uses light energy to abstract electrons from H(2)O, generating O(2) and a proton gradient subsequently used for ATP formation. It consists of a core antenna complex that captures photons, and an electron transfer chain that converts photonic excitation into a charge separation. The D1/D2 (PsbA/PsbD) reaction center heterodimer binds P680, the primary electron donor of PSII as well as several subsequent electron acceptors. D2 is needed for assembly of a stable PSII complex. The polypeptide is Photosystem II D2 protein (Marchantia polymorpha (Common liverwort)).